Consider the following 179-residue polypeptide: Insulin-like growth factor 2 (179 aa).

Residues 1 to 24 form the signal peptide; that stretch reads MGITAGKSVLVLLAFLAFASCCYA. The b stretch occupies residues 25-52; the sequence is AYRPSETLCGGELVDTLQFVCGDRGFYF. Intrachain disulfides connect C33–C71, C45–C84, and C70–C75. A c region spans residues 53-64; sequence SRPSSRINRRSR. An a region spans residues 65–85; it reads GIVEECCFRSCDLALLETYCA. The d stretch occupies residues 86–91; it reads TPAKSE. Positions 92-179 are cleaved as a propeptide — e peptide; that stretch reads RDVSASTTVL…GGASSKASSD (88 aa). O-linked (GalNAc...) threonine glycosylation occurs at T106. An O-linked (GalNAc...) serine glycan is attached at S154. A disordered region spans residues 160–179; it reads ALPTQDPATHGGASSKASSD. The O-linked (GalNAc...) threonine glycan is linked to T163.

Belongs to the insulin family. Interacts with MYORG; this interaction is required for IGF2 secretion. Interacts with integrins ITGAV:ITGB3 and ITGA6:ITGB4; integrin-binding is required for IGF2 signaling. Interacts with IGFBP2. Post-translationally, proteolytically processed by PCSK4, proIGF2 is cleaved at Arg-128 and Arg-92 to generate big-IGF2 and mature IGF2.

The protein resides in the secreted. Functionally, the insulin-like growth factors possess growth-promoting activity. Major fetal growth hormone in mammals. Plays a key role in regulating fetoplacental development. IGF2 is influenced by placental lactogen. Also involved in tissue differentiation. In adults, involved in glucose metabolism in adipose tissue, skeletal muscle and liver. Acts as a ligand for integrin which is required for IGF2 signaling. Positively regulates myogenic transcription factor MYOD1 function by facilitating the recruitment of transcriptional coactivators, thereby controlling muscle terminal differentiation. Inhibits myoblast differentiation and modulates metabolism via increasing the mitochondrial respiration rate. Preptin undergoes glucose-mediated co-secretion with insulin, and acts as a physiological amplifier of glucose-mediated insulin secretion. Exhibits osteogenic properties by increasing osteoblast mitogenic activity through phosphoactivation of MAPK1 and MAPK3. In Bos taurus (Bovine), this protein is Insulin-like growth factor 2.